The following is a 101-amino-acid chain: Small ribosomal subunit protein uS14 (101 aa).

It belongs to the universal ribosomal protein uS14 family. Part of the 30S ribosomal subunit. Contacts proteins S3 and S10.

In terms of biological role, binds 16S rRNA, required for the assembly of 30S particles and may also be responsible for determining the conformation of the 16S rRNA at the A site. The sequence is that of Small ribosomal subunit protein uS14 from Chlamydia caviae (strain ATCC VR-813 / DSM 19441 / 03DC25 / GPIC) (Chlamydophila caviae).